The sequence spans 439 residues: Ribosomal protein uS12 methylthiotransferase RimO (439 aa).

Residues 1 to 117 (MNIGFISLGC…IAGVVNRIAQ (117 aa)) form the MTTase N-terminal domain. [4Fe-4S] cluster-binding residues include C10, C46, C80, C154, C158, and C161. One can recognise a Radical SAM core domain in the interval 140–370 (TTPPGSAYLK…LRLQQKITRQ (231 aa)). A TRAM domain is found at 373-439 (LARINTQEKV…RNYDMIGEYQ (67 aa)).

This sequence belongs to the methylthiotransferase family. RimO subfamily. [4Fe-4S] cluster is required as a cofactor.

Its subcellular location is the cytoplasm. The catalysed reaction is L-aspartate(89)-[ribosomal protein uS12]-hydrogen + (sulfur carrier)-SH + AH2 + 2 S-adenosyl-L-methionine = 3-methylsulfanyl-L-aspartate(89)-[ribosomal protein uS12]-hydrogen + (sulfur carrier)-H + 5'-deoxyadenosine + L-methionine + A + S-adenosyl-L-homocysteine + 2 H(+). Its function is as follows. Catalyzes the methylthiolation of an aspartic acid residue of ribosomal protein uS12. The chain is Ribosomal protein uS12 methylthiotransferase RimO from Syntrophomonas wolfei subsp. wolfei (strain DSM 2245B / Goettingen).